Reading from the N-terminus, the 156-residue chain is Small ribosomal subunit protein uS7 (156 aa).

Belongs to the universal ribosomal protein uS7 family. In terms of assembly, part of the 30S ribosomal subunit. Contacts proteins S9 and S11.

Its function is as follows. One of the primary rRNA binding proteins, it binds directly to 16S rRNA where it nucleates assembly of the head domain of the 30S subunit. Is located at the subunit interface close to the decoding center, probably blocks exit of the E-site tRNA. This Staphylococcus carnosus (strain TM300) protein is Small ribosomal subunit protein uS7.